The chain runs to 382 residues: PPE family protein PPE44 (382 aa).

It belongs to the mycobacterial PPE family.

The protein localises to the secreted. The protein resides in the cell wall. Its subcellular location is the cell surface. Functionally, virulence factor that modulates host innate immune response. The sequence is that of PPE family protein PPE44 from Mycobacterium tuberculosis (strain CDC 1551 / Oshkosh).